The primary structure comprises 152 residues: Deoxyuridine 5'-triphosphate nucleotidohydrolase (152 aa).

Substrate is bound by residues 71–73 (RSG), Asn84, 88–90 (LID), and Met98.

The protein belongs to the dUTPase family. Mg(2+) serves as cofactor.

It carries out the reaction dUTP + H2O = dUMP + diphosphate + H(+). It participates in pyrimidine metabolism; dUMP biosynthesis; dUMP from dCTP (dUTP route): step 2/2. Functionally, this enzyme is involved in nucleotide metabolism: it produces dUMP, the immediate precursor of thymidine nucleotides and it decreases the intracellular concentration of dUTP so that uracil cannot be incorporated into DNA. In Aeromonas salmonicida (strain A449), this protein is Deoxyuridine 5'-triphosphate nucleotidohydrolase.